The sequence spans 255 residues: Cyclic di-GMP phosphodiesterase PdeH (255 aa).

One can recognise an EAL domain in the interval 13–255; that stretch reads EASIESLQER…ETLNTAVLAL (243 aa).

The catalysed reaction is 3',3'-c-di-GMP + H2O = 5'-phosphoguanylyl(3'-&gt;5')guanosine + H(+). Functionally, involved in the control of the switch from cell motility to adhesion via regulation of cellular levels of cyclic-di-GMP (c-di-GMP). Part of a signaling cascade that regulates curli biosynthesis. The cascade is composed of two c-di-GMP control modules, in which c-di-GMP controlled by the DgcE/PdeH pair (module I) regulates the activity of the DgcM/PdeR pair (module II), which in turn regulates activity of the transcription factor MlrA and expression of the master biofilm regulator csgD. Effect on flagella is controlled via the c-di-GMP-binding flagellar brake protein YcgR. The sequence is that of Cyclic di-GMP phosphodiesterase PdeH from Escherichia coli (strain K12).